Consider the following 218-residue polypeptide: uncharacterized protein (218 aa).

5 consecutive transmembrane segments (helical) span residues 28–48 (ILLF…LSGL), 66–86 (FDIG…WKPL), 92–112 (LGTL…TKIL), 122–142 (MIFC…YLTC), and 173–193 (ISVC…TVLF).

Its subcellular location is the cell membrane. This is an uncharacterized protein from Haemophilus influenzae (strain ATCC 51907 / DSM 11121 / KW20 / Rd).